The chain runs to 580 residues: Putative Xaa-Pro dipeptidyl-peptidase (580 aa).

Active-site charge relay system residues include Ser207, Asp319, and His350.

It belongs to the peptidase S15 family.

It catalyses the reaction Hydrolyzes Xaa-Pro-|- bonds to release unblocked, N-terminal dipeptides from substrates including Ala-Pro-|-p-nitroanilide and (sequentially) Tyr-Pro-|-Phe-Pro-|-Gly-Pro-|-Ile.. The polypeptide is Putative Xaa-Pro dipeptidyl-peptidase (Bacillus cereus (strain ATCC 14579 / DSM 31 / CCUG 7414 / JCM 2152 / NBRC 15305 / NCIMB 9373 / NCTC 2599 / NRRL B-3711)).